The following is a 123-amino-acid chain: Alpha-ketoglutarate dehydrogenase subunit 4, mitochondrial (123 aa).

A mitochondrion-targeting transit peptide spans 1 to 8 (MIATPIRL).

Belongs to the alpha-ketoglutarate dehydrogenase component 4 family. In terms of assembly, component of the 2-oxoglutarate dehydrogenase complex (OGDC), also called alpha-ketoglutarate dehydrogenase (KGDH) complex. The copmplex is composed of the catalytic subunits OGDH (2-oxoglutarate dehydrogenase KGD1; also called E1 subunit), DLST (dihydrolipoamide succinyltransferase KGD2; also called E2 subunit) and DLD (dihydrolipoamide dehydrogenase LPD1; also called E3 subunit), and the assembly factor KGD4. Within OGDC, interacts (via N-terminus) with E3 subunit and (via C-terminus) with the complex core formed by E1 and E2 subunits.

It is found in the mitochondrion. Functionally, molecular adapter that is necessary to a form a stable 2-oxoglutarate dehydrogenase enzyme complex (OGDC). Required for incorporation of the E3 subunit (LPD1) into the E1-E2 core (KGD1-KGD2) of mitochondrial OGDC, and acting as a stability factor for the fully assembled complex. The protein is Alpha-ketoglutarate dehydrogenase subunit 4, mitochondrial of Saccharomyces cerevisiae (strain ATCC 204508 / S288c) (Baker's yeast).